Consider the following 333-residue polypeptide: Adenosine deaminase (333 aa).

Zn(2+)-binding residues include H12 and H14. Substrate-binding residues include H14, D16, and G170. A Zn(2+)-binding site is contributed by H197. The active-site Proton donor is E200. D278 contacts Zn(2+). D279 provides a ligand contact to substrate.

The protein belongs to the metallo-dependent hydrolases superfamily. Adenosine and AMP deaminases family. Adenosine deaminase subfamily. Requires Zn(2+) as cofactor.

The catalysed reaction is adenosine + H2O + H(+) = inosine + NH4(+). The enzyme catalyses 2'-deoxyadenosine + H2O + H(+) = 2'-deoxyinosine + NH4(+). Catalyzes the hydrolytic deamination of adenosine and 2-deoxyadenosine. The protein is Adenosine deaminase of Salmonella typhi.